We begin with the raw amino-acid sequence, 308 residues long: Porphobilinogen deaminase (308 aa).

C241 bears the S-(dipyrrolylmethanemethyl)cysteine mark.

Belongs to the HMBS family. In terms of assembly, monomer. The cofactor is dipyrromethane.

The catalysed reaction is 4 porphobilinogen + H2O = hydroxymethylbilane + 4 NH4(+). Its pathway is porphyrin-containing compound metabolism; protoporphyrin-IX biosynthesis; coproporphyrinogen-III from 5-aminolevulinate: step 2/4. Tetrapolymerization of the monopyrrole PBG into the hydroxymethylbilane pre-uroporphyrinogen in several discrete steps. The polypeptide is Porphobilinogen deaminase (Staphylococcus carnosus (strain TM300)).